The primary structure comprises 192 residues: Phosphoheptose isomerase (192 aa).

The 159-residue stretch at 34-192 (LADALGNGKK…LEKRLFGERR (159 aa)) folds into the SIS domain. 49–51 (NGG) serves as a coordination point for substrate. Histidine 58 and glutamate 62 together coordinate Zn(2+). Residues glutamate 62, 91-92 (ND), 117-119 (STS), serine 122, and glutamine 169 contribute to the substrate site. 2 residues coordinate Zn(2+): glutamine 169 and histidine 177.

The protein belongs to the SIS family. GmhA subfamily. As to quaternary structure, homotetramer. Requires Zn(2+) as cofactor.

Its subcellular location is the cytoplasm. The enzyme catalyses 2 D-sedoheptulose 7-phosphate = D-glycero-alpha-D-manno-heptose 7-phosphate + D-glycero-beta-D-manno-heptose 7-phosphate. It functions in the pathway carbohydrate biosynthesis; D-glycero-D-manno-heptose 7-phosphate biosynthesis; D-glycero-alpha-D-manno-heptose 7-phosphate and D-glycero-beta-D-manno-heptose 7-phosphate from sedoheptulose 7-phosphate: step 1/1. Its function is as follows. Catalyzes the isomerization of sedoheptulose 7-phosphate in D-glycero-D-manno-heptose 7-phosphate. The chain is Phosphoheptose isomerase from Geotalea daltonii (strain DSM 22248 / JCM 15807 / FRC-32) (Geobacter daltonii).